We begin with the raw amino-acid sequence, 590 residues long: MRTHYSSDINEKLQGQKVTVCGWVHRRRDHGGVIFLDIRDRTGLVQLVFNPDNDNFKVADSLRSEFVIKAEGVVNLRPEGQENKNISSGKVEIIGDSIEVINKSKTIPFQLDDFQSTGEDVKLKYRYIDLRRPEMQHKLITRSKAIRYVRNFLDNNGFLDIETPFLTKATPEGARDYLVPSRNFNGKFYALPQSPQLFKQLLMVSGFDRYYQIVKCFRDEDLRADRQPEFTQIDIEASFIDEAFIMSTMERMIAGLFKETIGVEFATPFQVMTFADAIDKYGSDKPDLRIPLEFVNIKEDMQNEEFKVFSGPANDPQSRVIALRIPGGNDKLTRKMIDEYTKFVGIYGAKGLAYIKINSLSQGKEGLQSPIVKNISEETLFKVIEKTSAKEGDLLFFGAGKAKIVNDSMGALRAKIGEDLDLFNKDWAPLWVVDFPMFEKDDNRLYAMHHPFTAPKVSSVEDLVNTNPEELSSRAYDMVINGYEVGGGSIRIHKQDIQAKVFNLLGISDDEAREKFGFMLDALSYGTPIHGGIAFGVDRLIMLLTGTTNIRDVIAFPKTQTASCLMTEAPSTVSLEQLNELGIAVKKEER.

E172 contacts L-aspartate. Residues Q196–K199 are aspartate. R218 serves as a coordination point for L-aspartate. ATP is bound by residues R218–E220 and Q227. H449 provides a ligand contact to L-aspartate. Residue E484 coordinates ATP. R491 is a binding site for L-aspartate. G536 to R539 serves as a coordination point for ATP.

Belongs to the class-II aminoacyl-tRNA synthetase family. Type 1 subfamily. Homodimer.

It is found in the cytoplasm. It catalyses the reaction tRNA(Asx) + L-aspartate + ATP = L-aspartyl-tRNA(Asx) + AMP + diphosphate. Aspartyl-tRNA synthetase with relaxed tRNA specificity since it is able to aspartylate not only its cognate tRNA(Asp) but also tRNA(Asn). Reaction proceeds in two steps: L-aspartate is first activated by ATP to form Asp-AMP and then transferred to the acceptor end of tRNA(Asp/Asn). The sequence is that of Aspartate--tRNA(Asp/Asn) ligase from Francisella tularensis subsp. tularensis (strain WY96-3418).